A 122-amino-acid chain; its full sequence is Large ribosomal subunit protein uL14 (122 aa).

The protein belongs to the universal ribosomal protein uL14 family. As to quaternary structure, part of the 50S ribosomal subunit. Forms a cluster with proteins L3 and L19. In the 70S ribosome, L14 and L19 interact and together make contacts with the 16S rRNA in bridges B5 and B8.

Functionally, binds to 23S rRNA. Forms part of two intersubunit bridges in the 70S ribosome. This Caulobacter vibrioides (strain ATCC 19089 / CIP 103742 / CB 15) (Caulobacter crescentus) protein is Large ribosomal subunit protein uL14.